The sequence spans 357 residues: ATP-dependent 6-phosphofructokinase 2 (357 aa).

ATP contacts are provided by residues glycine 12, 80–81, and 107–110; these read KG and GDGS. Aspartate 108 contributes to the Mg(2+) binding site. Substrate-binding positions include 131-133, arginine 168, 175-177, glutamate 229, arginine 272, and 278-281; these read TID, MGR, and HIQR. Aspartate 133 functions as the Proton acceptor in the catalytic mechanism.

This sequence belongs to the phosphofructokinase type A (PFKA) family. Mixed-substrate PFK group III subfamily. As to quaternary structure, homodimer or homotetramer. It depends on Mg(2+) as a cofactor.

It localises to the cytoplasm. It carries out the reaction beta-D-fructose 6-phosphate + ATP = beta-D-fructose 1,6-bisphosphate + ADP + H(+). It participates in carbohydrate degradation; glycolysis; D-glyceraldehyde 3-phosphate and glycerone phosphate from D-glucose: step 3/4. With respect to regulation, subject to allosteric activation by ADP and other diphosphonucleosides, and inhibition by phosphoenolpyruvate. In terms of biological role, catalyzes the phosphorylation of D-fructose 6-phosphate to fructose 1,6-bisphosphate by ATP, the first committing step of glycolysis. The protein is ATP-dependent 6-phosphofructokinase 2 of Nostoc sp. (strain PCC 7120 / SAG 25.82 / UTEX 2576).